The sequence spans 306 residues: Replication termination factor 2 (306 aa).

Residues 193 to 276 (AKLEKKTKKP…RSIADSEESE (84 aa)) are disordered. Residues 226 to 240 (GKPEEASLDSREKKT) show a composition bias toward basic and acidic residues. A compositionally biased stretch (polar residues) spans 243–255 (APKSTAMNESSSG). Residue serine 287 is modified to Phosphoserine.

The protein belongs to the rtf2 family. In terms of assembly, interacts with DDI2; probably also interacts with DDI1. In terms of processing, undergoes proteasomal degradation, via DDI1 and DDI2. Removal from stalled replisomes and degradation are required for genome stability.

Its subcellular location is the chromosome. Replication termination factor which is a component of the elongating replisome. Required for ATR pathway signaling upon DNA damage and has a positive activity during DNA replication. Might function to facilitate fork pausing at replication fork barriers like the rDNA. May be globally required to stimulate ATR signaling after the fork stalls or encounters a lesion. Interacts with nascent DNA. This chain is Replication termination factor 2, found in Homo sapiens (Human).